A 173-amino-acid chain; its full sequence is Enhancer of split mdelta protein (173 aa).

The bHLH domain maps to 15–72; it reads YRKVTKPLLERKRRARMNLYLDELKDLIVDTMDAQGEQVSKLEKADILELTVNYLKAQ. One can recognise an Orange domain in the interval 93–126; sequence FRAGYTQAAYEVSHIFSTVPGLDLKFGTHLMKQL. Positions 147-173 are disordered; the sequence is VNLADQKRSKSPREEDIHHGEEVWRPW. The segment covering 151-173 has biased composition (basic and acidic residues); sequence DQKRSKSPREEDIHHGEEVWRPW. Residues 170–173 carry the WRPW motif motif; that stretch reads WRPW.

As to quaternary structure, transcription repression requires formation of a complex with a corepressor protein (Groucho).

The protein localises to the nucleus. Transcriptional repressor of genes that require a bHLH protein for their transcription. May serve as a transcriptional regulator of the Achaete-scute complex (AS-C) genes. Contributes to the neural-epidermal lineage decision during early neurogenesis. As part of the Notch signaling pathway, required to maintain the self-renewal and identity of type II neuroblasts by regulating the expression of the transcriptional repressor erm. The chain is Enhancer of split mdelta protein from Drosophila melanogaster (Fruit fly).